The following is a 246-amino-acid chain: Probable septum site-determining protein MinC (246 aa).

Belongs to the MinC family. In terms of assembly, interacts with MinD and FtsZ.

Cell division inhibitor that blocks the formation of polar Z ring septums. Rapidly oscillates between the poles of the cell to destabilize FtsZ filaments that have formed before they mature into polar Z rings. Prevents FtsZ polymerization. The protein is Probable septum site-determining protein MinC of Pseudomonas syringae pv. syringae (strain B728a).